Reading from the N-terminus, the 386-residue chain is Acyl-CoA ligase lcsD (386 aa).

An SBD1 region spans residues 62–132; that stretch reads ELEQTLLAIQ…ELLPACKIIQ (71 aa). 107 to 115 serves as a coordination point for ATP; the sequence is AVGASGISK. Residues 133 to 195 form an SBD2 region; sequence GYGMTETTGV…LRSPSVVIGY (63 aa). Position 137 (Thr137) interacts with substrate. ATP-binding residues include Asp216 and Arg235. CoA is bound by residues 243-245 and 313-316; these read RGL and HLDG. Lys331 is a binding site for ATP. The disordered stretch occupies residues 352 to 386; the sequence is REKAANGVHKVHVNGVKRPEKMEVFDLSSDDEDDD.

This sequence belongs to the ATP-dependent AMP-binding enzyme family.

Its pathway is secondary metabolite biosynthesis. Functionally, acyl-CoA ligase; part of the gene cluster that mediates the biosynthesis of the lipopeptide antibiotics leucinostatins that show extensive biological activities, including antimalarial, antiviral, antibacterial, antifungal, and antitumor activities, as well as phytotoxic. Leucinostatin A contains nine amino acid residues, including the unusual amino acid 4-methyl-L-proline (MePro), 2-amino-6-hydroxy-4-methyl-8-oxodecanoic acid (AHyMeOA), 3-hydroxyleucine (HyLeu), alpha-aminoisobutyric acid (AIB), beta-Ala, a 4-methylhex-2-enoic acid at the N-terminus as well as a N1,N1-dimethylpropane-1,2-diamine (DPD) at the C-terminus. The biosynthesis of leucinostatins is probably initiated with the assembly of 4-methylhex-2-enoic acid by a reducing PKS. Two reducing polyketide synthases, lcsB and lcsC, have been identified in the cluster and it is not clear which is the one that assembles 4-methylhex-2-enoic acid since both contain KS, AT, DH, cMT, ER, KR and ACP domains. The polyketide residue might be transferred to the NRPS lcsA, mediated by two additional enzymes, the acyl-CoA ligase lcsD and the thioesterase lcsE. The linear polyketide carboxylic acid, which is released from PKS, is converted to a CoA thioester by lcsD, and then lcsE hydrolyzes the thiol bond and shuttles the polyketide intermediate to lcsA. The C domain of the first module catalyzed the condensation of 4-methylhex-2-enoic acid and MePro carried by domain A1, followed by successive condensations of nine amino acids to trigger the elongation of the linear peptide. A5 and A6 domains of lcsA are proposed to incorporate leucine, A2 AHyMeOA, and A3 incorporates HyLeu. A4, A7 and A8 incorporate AIB. The AHyMeOA in leucinostatin A activated by the A2 might be produced by the second PKS (lcsB or lcsC) present within the cluster. The MePro is probably produced via leucine cyclization and may originate from a separate pathway, independent of the cluster. Another nonproteinogenic amino acid, beta-Ala, could be produced by an aspartic acid decarboxylase also localized outside of the cluster. Two candidates are VFPBJ_01400 and VFPBJ_10476. The final peptide scaffold may be released by the NAD(P)H-dependent thioester reductase (TE) at the C-terminal region of lcsA. Transamination of the lcsA product by the transaminase lcsP may produce DPD at the C-terminus. Further hydroxylation steps performed alternatively by the cytochrome P450 monooxygenases lcsI, lcsK and lcsN then yield the non-methylated leucinostatins precursor. It is also possible that leucines can be hydroxylated prior to their incorporation into the peptide. Varying extents of methylation then lead to the formation of leucinostatins A and B. This Purpureocillium lilacinum (Paecilomyces lilacinus) protein is Acyl-CoA ligase lcsD.